The sequence spans 203 residues: Phospho-2-dehydro-3-deoxyheptonate aldolase (203 aa).

Residues 1–10 show a composition bias toward basic and acidic residues; it reads MIDRLVRDSR. Residues 1–28 are disordered; sequence MIDRLVRDSRGPVTERNPPHMSLSAGPA.

This sequence belongs to the class-I DAHP synthase family.

The catalysed reaction is D-erythrose 4-phosphate + phosphoenolpyruvate + H2O = 7-phospho-2-dehydro-3-deoxy-D-arabino-heptonate + phosphate. It functions in the pathway metabolic intermediate biosynthesis; chorismate biosynthesis; chorismate from D-erythrose 4-phosphate and phosphoenolpyruvate: step 1/7. Its function is as follows. Stereospecific condensation of phosphoenolpyruvate (PEP) and D-erythrose-4-phosphate (E4P) giving rise to 3-deoxy-D-arabino-heptulosonate-7-phosphate (DAHP). This is Phospho-2-dehydro-3-deoxyheptonate aldolase (aroA) from Amycolatopsis methanolica.